A 134-amino-acid polypeptide reads, in one-letter code: Methylglyoxal synthase (134 aa).

The MGS-like domain maps to 1–134; sequence MVNLNIALIA…GLLEWRNAVK (134 aa). Residues H11, K15, and 37–40 each bind substrate; that span reads TGAT. D63 (proton donor/acceptor) is an active-site residue. Substrate is bound at residue H90.

This sequence belongs to the methylglyoxal synthase family.

It catalyses the reaction dihydroxyacetone phosphate = methylglyoxal + phosphate. Catalyzes the formation of methylglyoxal from dihydroxyacetone phosphate. This is Methylglyoxal synthase from Thermoanaerobacterium thermosaccharolyticum (Clostridium thermosaccharolyticum).